We begin with the raw amino-acid sequence, 1063 residues long: Coiled-coil domain-containing protein 187 (1063 aa).

Disordered regions lie at residues 1 to 41, 62 to 184, 219 to 278, 300 to 319, 392 to 484, 496 to 539, and 551 to 658; these read MPTL…AADW, RWPG…SRLH, RVEA…KDED, PPPV…PALT, RKGG…ERLG, GQAC…ATQP, and WEDP…LEEK. A compositionally biased stretch (low complexity) spans 111-124; sequence SSVSSGRLSCSSGG. Residues 146-160 are compositionally biased toward basic and acidic residues; the sequence is RKSDARLEQLRDKIR. A compositionally biased stretch (polar residues) spans 163 to 181; sequence AWQQGSCASLGTSAPSSAS. Basic and acidic residues predominate over residues 219 to 233; sequence RVEAKASHGQGRELS. Composition is skewed to basic and acidic residues over residues 431–442 and 472–484; these read TERKHSSLERAR and SFQR…ERLG. The segment covering 508–517 has biased composition (low complexity); it reads QRQGPSSQRP. A coiled-coil region spans residues 816–851; sequence HLRHKQAQLQALETTAKVLKQRVDSLTAKLQGAEAL. The interval 1010–1030 is disordered; that stretch reads PRSCGKGDPADRPWAGWSGGR.

The polypeptide is Coiled-coil domain-containing protein 187 (Homo sapiens (Human)).